Consider the following 101-residue polypeptide: Small ribosomal subunit protein uS14A (101 aa).

The interval 32-71 (RRPGTPEPERNRAVEELRRQPRDASATRVRNRDSVDGRPR) is disordered. Basic and acidic residues-rich tracts occupy residues 38–53 (EPER…RQPR) and 61–70 (RNRDSVDGRP).

The protein belongs to the universal ribosomal protein uS14 family. In terms of assembly, part of the 30S ribosomal subunit. Contacts proteins S3 and S10.

Binds 16S rRNA, required for the assembly of 30S particles and may also be responsible for determining the conformation of the 16S rRNA at the A site. This chain is Small ribosomal subunit protein uS14A, found in Streptomyces griseus subsp. griseus (strain JCM 4626 / CBS 651.72 / NBRC 13350 / KCC S-0626 / ISP 5235).